We begin with the raw amino-acid sequence, 526 residues long: MLQEESDLSLIIAQIVQKLKGSNLYSQLERQAWASLQRPEIKLESLKEDIKEFFKISGWEKKLQNAVYSELSVFPLPSHPAAPPEHLKEPLVYMRKAQGSWEKRILKSLNSMCTELSIPLARKRPVGEQKELLNKWNEMGTDEPDLSLFRPVYAPKDFLEVLINLRNPNYENGDSLSFRTHLGLIQVPLKVKDIPELKECFVELGLNIGQLGIDDSTQVPPELFENEHVRIGQKVLAEQDSAAAQQYIRQGSPTALRAELWALILNISSQPEDVLYYEQLKTNVIQHDLLVDSLIYKDVKLTASNDDYYFVFEDYLYQVLLCFSRDTSVLSHFAFNSASPPKSYIRGKLGLEEYAVFYPPNGVIPFHGFSMYVAPLCFLYHEPSKLYQIFREMYVRFFFRLHSISSHPSGIVSLCLLFETLLQTYLPQLFYHLREIGAQPLRISFKWMVRAFSGYLATDQLLLLWDRILGYNSLEILAVLAAAVFAFRAVNLMEVTSLAAAEAVLADLSTLKVMPLLQIFLFATVT.

Residues Gly-251–Asn-472 form the Rab-GAP TBC domain.

In terms of biological role, may act as a GTPase-activating protein for Rab family protein(s). The polypeptide is TBC1 domain family member 19 (TBC1D19) (Homo sapiens (Human)).